Here is a 624-residue protein sequence, read N- to C-terminus: tRNA uridine 5-carboxymethylaminomethyl modification enzyme MnmG (624 aa).

FAD-binding positions include 13 to 18 (GAGHAG), valine 125, and serine 180. Residue 272-286 (GPRYCPSIEDKVVKF) participates in NAD(+) binding. Glutamine 369 contributes to the FAD binding site.

Belongs to the MnmG family. Homodimer. Heterotetramer of two MnmE and two MnmG subunits. FAD serves as cofactor.

It is found in the cytoplasm. In terms of biological role, NAD-binding protein involved in the addition of a carboxymethylaminomethyl (cmnm) group at the wobble position (U34) of certain tRNAs, forming tRNA-cmnm(5)s(2)U34. The polypeptide is tRNA uridine 5-carboxymethylaminomethyl modification enzyme MnmG (Thermodesulfovibrio yellowstonii (strain ATCC 51303 / DSM 11347 / YP87)).